A 236-amino-acid polypeptide reads, in one-letter code: Leucyl/phenylalanyl-tRNA--protein transferase (236 aa).

Belongs to the L/F-transferase family.

Its subcellular location is the cytoplasm. It catalyses the reaction N-terminal L-lysyl-[protein] + L-leucyl-tRNA(Leu) = N-terminal L-leucyl-L-lysyl-[protein] + tRNA(Leu) + H(+). It carries out the reaction N-terminal L-arginyl-[protein] + L-leucyl-tRNA(Leu) = N-terminal L-leucyl-L-arginyl-[protein] + tRNA(Leu) + H(+). The catalysed reaction is L-phenylalanyl-tRNA(Phe) + an N-terminal L-alpha-aminoacyl-[protein] = an N-terminal L-phenylalanyl-L-alpha-aminoacyl-[protein] + tRNA(Phe). Functions in the N-end rule pathway of protein degradation where it conjugates Leu, Phe and, less efficiently, Met from aminoacyl-tRNAs to the N-termini of proteins containing an N-terminal arginine or lysine. This Shewanella woodyi (strain ATCC 51908 / MS32) protein is Leucyl/phenylalanyl-tRNA--protein transferase.